The sequence spans 335 residues: Serine protease 42 (335 aa).

A signal peptide spans 1–24; sequence MASGGGSLGLIVFLLLLQPKPCEA. Residue Asn-67 is glycosylated (N-linked (GlcNAc...) asparagine). Positions 79 to 315 constitute a Peptidase S1 domain; sequence IMGGVDAEEG…YSKWLIAVVN (237 aa). A disulfide bridge connects residues Cys-104 and Cys-120. The Charge relay system role is filled by His-119. Asn-140 is a glycosylation site (N-linked (GlcNAc...) asparagine). The Charge relay system role is filled by Asp-165. The N-linked (GlcNAc...) asparagine glycan is linked to Asn-176. 3 disulfide bridges follow: Cys-199–Cys-273, Cys-232–Cys-253, and Cys-263–Cys-291. The active-site Charge relay system is Ser-267.

This sequence belongs to the peptidase S1 family. In terms of tissue distribution, testis-specific. Mainly detected in round spermatids at all the eminiferous epithelial stages (at protein level).

It localises to the cytoplasm. The protein localises to the cell membrane. Its function is as follows. Plays a role in spermatogenesis. Involved in germ cell survival during meiosis. Lacks protease activity in vitro. This Mus musculus (Mouse) protein is Serine protease 42.